The sequence spans 521 residues: Manganese transporter pdt1 (521 aa).

Phosphoserine is present on Ser42. Thr43 carries the phosphothreonine modification. Helical transmembrane passes span 71-91 (YCKF…PGNY), 104-124 (KLLF…SLCI), 152-172 (VLAE…TAVA), 179-199 (IPLV…LIAW), 210-230 (IFET…AVVL), 233-253 (VHIG…TVFS), 260-280 (SIGI…SGLV), 325-345 (LFTF…AVFY), 373-393 (LFAV…TIAG), 417-437 (IAII…LNQV), 440-460 (ASQV…VMFT), and 495-515 (IVTW…IVWL).

The protein belongs to the NRAMP family.

It localises to the endoplasmic reticulum membrane. In terms of biological role, transports manganese ions into the cell. Regulates cell morphogenesis through control of manganese homeostasis. The protein is Manganese transporter pdt1 (pdt1) of Schizosaccharomyces pombe (strain 972 / ATCC 24843) (Fission yeast).